The sequence spans 727 residues: Testis anion transporter 1 (727 aa).

Topologically, residues 1–23 are cytoplasmic; sequence MLTIFPFLEWMCMYRLKDWLLGD. Residues 24 to 44 form a helical membrane-spanning segment; sequence LLAGISVGLVQVPQGLTLSLL. Topologically, residues 45–47 are extracellular; the sequence is ARQ. A helical membrane pass occupies residues 48–68; sequence LIPPLNIAYAAFCSSVIYVIF. Over 69–74 the chain is Cytoplasmic; it reads GSCHQM. A helical transmembrane segment spans residues 75–95; the sequence is SIGSFFLVSALLINVLKISPL. The Extracellular segment spans residues 96-130; sequence NNGHLVMGSFLKDEFSAPSYLMGYNKSLSVVATTT. Residue asparagine 120 is glycosylated (N-linked (GlcNAc...) asparagine). A helical transmembrane segment spans residues 131 to 151; that stretch reads FLTGIIQLIMGVLGLGFIATY. Residues 152-160 are Cytoplasmic-facing; the sequence is LPESAMSAY. The chain crosses the membrane as a helical span at residues 161-181; that stretch reads LAAVALHIMLSQLTCIFGIMI. The Extracellular segment spans residues 182-198; it reads SFHAGPISFFYDIINYC. Residues 199 to 219 traverse the membrane as a helical segment; that stretch reads VALPKANSTSILLFLTVVVAL. At 220–235 the chain is on the cytoplasmic side; it reads RINKCIRISFNQYPIE. Residues 236-256 traverse the membrane as a helical segment; the sequence is FPMELFLIIGFTVIGNKITMA. Residues 257-283 are Extracellular-facing; sequence TETSQTLIDMIPYSFLFPVTPDFSVLP. Residues 284 to 304 form a helical membrane-spanning segment; sequence KIILQAISLSLVSSFLLVFLG. Over 305 to 360 the chain is Cytoplasmic; it reads KKIASLHNYSVNSNQDLIAIGLCNVVSSFFRSCVFTGAVARTIIQDKSGGRQQFAS. A helical transmembrane segment spans residues 361–381; sequence LVGAGVMLLLMVKMGHFFYAL. At 382 to 383 the chain is on the extracellular side; it reads PN. Residues 384–404 form a helical membrane-spanning segment; the sequence is AVLAGIILSNVVPYLETISNL. Topologically, residues 405–424 are cytoplasmic; sequence PSLWRQDQYDCALWMMTFSS. A helical transmembrane segment spans residues 425–445; the sequence is SIFLGLDIGLIISVVSAFFIT. The Extracellular segment spans residues 446-727; that stretch reads SVRSHRAKIL…LPSFHLQHIF (282 aa). Residues 471 to 722 form the STAS domain; the sequence is DYREIITIPG…NSLSRLPSFH (252 aa). The interaction with RACGAP1 stretch occupies residues 592 to 727; it reads TVSSMSQKNQ…LPSFHLQHIF (136 aa).

The protein belongs to the SLC26A/SulP transporter (TC 2.A.53) family. Interacts with RACGAP1. Interacts with CFTR; stimulates anion transport activity of CFTR. N-glycosylated.

The protein localises to the membrane. The enzyme catalyses sulfate(out) + chloride(in) = sulfate(in) + chloride(out). It carries out the reaction oxalate(in) + chloride(out) = oxalate(out) + chloride(in). Its function is as follows. Antiporter that mediates the exchange of sulfate and oxalate against chloride ions across a membrane. Stimulates anion transport activity of CFTR. May cooperate with CFTR in the regulation of chloride and bicarbonate ions fluxes required for activation of the ADCY10/PKA pathway during sperm motility and sperm capacitation. May play a role in sperm tail differentiation and motility and hence male fertility. The chain is Testis anion transporter 1 from Macaca fascicularis (Crab-eating macaque).